Consider the following 298-residue polypeptide: ADP/ATP translocase 3 (298 aa).

Met-1 carries the N-acetylmethionine modification. Over 1–7 (MTEQAIS) the chain is Mitochondrial intermembrane. Position 2 is an N-acetylthreonine; in ADP/ATP translocase 3, N-terminally processed (Thr-2). A Solcar 1 repeat occupies 6–98 (ISFAKDFLAG…FAFKDKYKQI (93 aa)). A helical membrane pass occupies residues 8–37 (FAKDFLAGGIAAAISKTAVAPIERVKLLLQ). Residues 38 to 74 (VQHASKQIAADKQYKGIVDCIVRIPKEQGVLSFWRGN) lie on the Mitochondrial matrix side of the membrane. The residue at position 52 (Lys-52) is an N6,N6,N6-trimethyllysine. A helical membrane pass occupies residues 75 to 99 (LANVIRYFPTQALNFAFKDKYKQIF). ADP-binding residues include Arg-80 and Lys-92. The Mitochondrial intermembrane portion of the chain corresponds to 100–109 (LGGVDKHTQF). The residue at position 105 (Lys-105) is an N6-acetyllysine. The chain crosses the membrane as a helical span at residues 110–130 (WRYFAGNLASGGAAGATSLCF). Solcar repeat units follow at residues 111–201 (RYFA…AKGM) and 212–297 (VSWM…LKKV). At 131-178 (VYPLDFARTRLAADVGKSGTEREFRGLGDCLVKITKSDGIRGLYQGFS) the chain is on the mitochondrial matrix side. Residues 179–199 (VSVQGIIIYRAAYFGVYDTAK) form a helical membrane-spanning segment. Residues 200 to 210 (GMLPDPKNTHI) lie on the Mitochondrial intermembrane side of the membrane. The chain crosses the membrane as a helical span at residues 211–231 (VVSWMIAQTVTAVAGVVSYPF). Residues 232–273 (DTVRRRMMMQSGRKGADIMYTGTVDCWRKIFRDEGGKAFFKG) lie on the Mitochondrial matrix side of the membrane. ADP is bound at residue Arg-235. The important for transport activity stretch occupies residues 235-240 (RRRMMM). A Nucleotide carrier signature motif motif is present at residues 235–240 (RRRMMM). Residue Lys-268 is modified to N6-acetyllysine. A helical transmembrane segment spans residues 274-291 (AWSNVLRGMGGAFVLVLY). At 292–298 (DELKKVI) the chain is on the mitochondrial intermembrane side.

This sequence belongs to the mitochondrial carrier (TC 2.A.29) family. In terms of assembly, monomer. Found in a complex with ARL2, ARL2BP and SLC25A6/ANT3. (Microbial infection) Interacts with influenza A virus PB1-F2 protein. As to quaternary structure, (Microbial infection) Interacts with HIV-1 Vpr. Trimethylated by ANTKMT at Lys-52. As to expression, expressed in erythrocytes (at protein level).

Its subcellular location is the mitochondrion inner membrane. It localises to the membrane. It catalyses the reaction ADP(in) + ATP(out) = ADP(out) + ATP(in). The enzyme catalyses H(+)(in) = H(+)(out). With respect to regulation, the matrix-open state (m-state) is inhibited by the membrane-permeable bongkrekic acid (BKA). The cytoplasmic-open state (c-state) is inhibited by the membrane-impermeable toxic inhibitor carboxyatractyloside (CATR). Proton transporter activity is inhibited by ADP:ATP antiporter activity. ADP:ATP antiporter that mediates import of ADP into the mitochondrial matrix for ATP synthesis, and export of ATP out to fuel the cell. Cycles between the cytoplasmic-open state (c-state) and the matrix-open state (m-state): operates by the alternating access mechanism with a single substrate-binding site intermittently exposed to either the cytosolic (c-state) or matrix (m-state) side of the inner mitochondrial membrane. In addition to its ADP:ATP antiporter activity, also involved in mitochondrial uncoupling and mitochondrial permeability transition pore (mPTP) activity. Plays a role in mitochondrial uncoupling by acting as a proton transporter: proton transport uncouples the proton flows via the electron transport chain and ATP synthase to reduce the efficiency of ATP production and cause mitochondrial thermogenesis. Proton transporter activity is inhibited by ADP:ATP antiporter activity, suggesting that SLC25A6/ANT3 acts as a master regulator of mitochondrial energy output by maintaining a delicate balance between ATP production (ADP:ATP antiporter activity) and thermogenesis (proton transporter activity). Proton transporter activity requires free fatty acids as cofactor, but does not transport it. Also plays a key role in mPTP opening, a non-specific pore that enables free passage of the mitochondrial membranes to solutes of up to 1.5 kDa, and which contributes to cell death. It is however unclear if SLC25A6/ANT3 constitutes a pore-forming component of mPTP or regulates it. In Homo sapiens (Human), this protein is ADP/ATP translocase 3.